A 56-amino-acid polypeptide reads, in one-letter code: UPF0434 protein CbuG_1535 (56 aa).

This sequence belongs to the UPF0434 family.

The sequence is that of UPF0434 protein CbuG_1535 from Coxiella burnetii (strain CbuG_Q212) (Coxiella burnetii (strain Q212)).